The following is a 75-amino-acid chain: Conotoxin Vn5.6 (75 aa).

The first 19 residues, 1–19, serve as a signal peptide directing secretion; it reads MLCLPVFIILLLLASPAAP. A propeptide spanning residues 20–59 is cleaved from the precursor; that stretch reads NPLEKRIQSDLIRAALEDADMKTGEREILNIIDSISDVAK. At Q60 the chain carries Pyrrolidone carboxylic acid.

This sequence belongs to the conotoxin T superfamily. In terms of processing, contains 2 disulfide bonds that can be either 'C1-C3, C2-C4' or 'C1-C4, C2-C3', since these disulfide connectivities have been observed for conotoxins with cysteine framework V (for examples, see AC P0DQQ7 and AC P81755). In terms of tissue distribution, expressed by the venom duct.

The protein localises to the secreted. This chain is Conotoxin Vn5.6, found in Conus ventricosus (Mediterranean cone).